A 69-amino-acid polypeptide reads, in one-letter code: Dodecin (69 aa).

Residue 3–5 coordinates FMN; sequence KVY. Residues Lys6, Arg28, and 32–34 contribute to the CoA site; that span reads TLR. Positions 37, 38, 45, 57, and 65 each coordinate FMN. 65–67 is a CoA binding site; it reads RLE.

This sequence belongs to the dodecin family. Homododecamer; four homotrimers assemble to form a dodecameric hollow sphere with an outer diameter of about 60 Angstroms. Flavin dimers are bound between subunits with a stoichiometry of 6 flavin dimers per dodecamer. Besides, trimeric coenzyme A molecules can be bound between subunits. A dodecamer can bind simultaneously 12 flavin and 12 coenzyme A molecules.

Its function is as follows. May function as storage protein that sequesters various flavins and other cofactors, thereby protecting the cell against undesirable reactions mediated by the free cofactors. Binds and sequesters FMN, FAD, lumiflavin and lumichrome, and can also bind coenzyme A. This Thermus thermophilus (strain ATCC 27634 / DSM 579 / HB8) protein is Dodecin.